Reading from the N-terminus, the 590-residue chain is Aspartate--tRNA(Asp/Asn) ligase (590 aa).

E175 is an L-aspartate binding site. The interval 199-202 is aspartate; it reads QQYK. Residues R221 and H450 each coordinate L-aspartate. 221–223 provides a ligand contact to ATP; that stretch reads RDE. Residue E484 participates in ATP binding. Residue R491 coordinates L-aspartate. 536–539 contacts ATP; that stretch reads GVDR.

It belongs to the class-II aminoacyl-tRNA synthetase family. Type 1 subfamily. As to quaternary structure, homodimer.

It localises to the cytoplasm. It carries out the reaction tRNA(Asx) + L-aspartate + ATP = L-aspartyl-tRNA(Asx) + AMP + diphosphate. In terms of biological role, aspartyl-tRNA synthetase with relaxed tRNA specificity since it is able to aspartylate not only its cognate tRNA(Asp) but also tRNA(Asn). Reaction proceeds in two steps: L-aspartate is first activated by ATP to form Asp-AMP and then transferred to the acceptor end of tRNA(Asp/Asn). In Rhodopseudomonas palustris (strain HaA2), this protein is Aspartate--tRNA(Asp/Asn) ligase.